We begin with the raw amino-acid sequence, 68 residues long: ATP synthase protein 8 (68 aa).

A helical membrane pass occupies residues 8-24; sequence VWPTIIMSMLLALFLLM. K54 carries the post-translational modification N6-acetyllysine; alternate. K54 carries the N6-succinyllysine; alternate modification. The residue at position 57 (K57) is an N6-acetyllysine.

Belongs to the ATPase protein 8 family. In terms of assembly, F-type ATPases have 2 components, CF(1) - the catalytic core - and CF(0) - the membrane proton channel. Component of an ATP synthase complex composed of ATP5PB, ATP5MC1, ATP5F1E, ATP5PD, ATP5ME, ATP5PF, ATP5MF, MT-ATP6, MT-ATP8, ATP5F1A, ATP5F1B, ATP5F1D, ATP5F1C, ATP5PO, ATP5MG, ATP5MK and ATP5MJ. Interacts with PRICKLE3.

Its subcellular location is the mitochondrion membrane. In terms of biological role, mitochondrial membrane ATP synthase (F(1)F(0) ATP synthase or Complex V) produces ATP from ADP in the presence of a proton gradient across the membrane which is generated by electron transport complexes of the respiratory chain. F-type ATPases consist of two structural domains, F(1) - containing the extramembraneous catalytic core and F(0) - containing the membrane proton channel, linked together by a central stalk and a peripheral stalk. During catalysis, ATP synthesis in the catalytic domain of F(1) is coupled via a rotary mechanism of the central stalk subunits to proton translocation. Part of the complex F(0) domain. Minor subunit located with subunit a in the membrane. The polypeptide is ATP synthase protein 8 (MT-ATP8) (Hylobates lar (Lar gibbon)).